We begin with the raw amino-acid sequence, 115 residues long: Replication initiation control protein YabA (115 aa).

4 residues coordinate Zn(2+): His90, Cys92, Cys106, and Cys109.

The protein belongs to the YabA family. Homotetramer. Interacts with both DnaA and DnaN, acting as a bridge between these two proteins. It depends on Zn(2+) as a cofactor.

Its subcellular location is the cytoplasm. The protein resides in the nucleoid. Involved in control of chromosome replication initiation. Inhibits the cooperative binding of DnaA to the oriC region, thus negatively regulating initiation of chromosome replication. Inhibits the ability of DnaA-ATP to form a helix on DNA; does not disassemble preformed DnaA-DNA helices. Decreases the residence time of DnaA on the chromosome at its binding sites (oriC, replication forks and promoter-binding sites). Tethers DnaA to the replication machinery via the DNA polymerase beta sliding clamp subunit (dnaN). Associates with oriC and other DnaA targets on the chromosome in a DnaA-dependent manner. The polypeptide is Replication initiation control protein YabA (Staphylococcus aureus (strain bovine RF122 / ET3-1)).